Reading from the N-terminus, the 137-residue chain is NADH-quinone oxidoreductase subunit A (137 aa).

3 helical membrane-spanning segments follow: residues 12 to 32 (WGFAIFLLGVVGLCAFMLGLS), 66 to 86 (FYLVAMLFVIFDIEALFLFAW), and 95 to 115 (WTGFVEALVFIAILLAGLVYL).

This sequence belongs to the complex I subunit 3 family. NDH-1 is composed of 13 different subunits. Subunits NuoA, H, J, K, L, M, N constitute the membrane sector of the complex.

The protein resides in the cell inner membrane. The enzyme catalyses a quinone + NADH + 5 H(+)(in) = a quinol + NAD(+) + 4 H(+)(out). In terms of biological role, NDH-1 shuttles electrons from NADH, via FMN and iron-sulfur (Fe-S) centers, to quinones in the respiratory chain. The immediate electron acceptor for the enzyme in this species is believed to be ubiquinone. Couples the redox reaction to proton translocation (for every two electrons transferred, four hydrogen ions are translocated across the cytoplasmic membrane), and thus conserves the redox energy in a proton gradient. This chain is NADH-quinone oxidoreductase subunit A, found in Pseudomonas putida (strain ATCC 700007 / DSM 6899 / JCM 31910 / BCRC 17059 / LMG 24140 / F1).